A 348-amino-acid polypeptide reads, in one-letter code: Beta-hexosaminidase (348 aa).

Residues D64, R72, R138, and 168–169 (KH) each bind substrate. H181 acts as the Proton donor/acceptor in catalysis. The active-site Nucleophile is D252.

Belongs to the glycosyl hydrolase 3 family. NagZ subfamily.

The protein resides in the cytoplasm. It catalyses the reaction Hydrolysis of terminal non-reducing N-acetyl-D-hexosamine residues in N-acetyl-beta-D-hexosaminides.. It functions in the pathway cell wall biogenesis; peptidoglycan recycling. In terms of biological role, plays a role in peptidoglycan recycling by cleaving the terminal beta-1,4-linked N-acetylglucosamine (GlcNAc) from peptide-linked peptidoglycan fragments, giving rise to free GlcNAc, anhydro-N-acetylmuramic acid and anhydro-N-acetylmuramic acid-linked peptides. This chain is Beta-hexosaminidase, found in Nitrosomonas eutropha (strain DSM 101675 / C91 / Nm57).